Reading from the N-terminus, the 413-residue chain is Alpha-1-antitrypsin 1-1 (413 aa).

The signal sequence occupies residues 1–24 (MTPSISWGLLLLAGLCCLVPSFLA). Asn-64, Asn-101, and Asn-265 each carry an N-linked (GlcNAc...) asparagine glycan. The RCL stretch occupies residues 368-387 (AVTVLQMVPMSMPPILRFDH).

Belongs to the serpin family.

Its subcellular location is the secreted. In terms of biological role, inhibitor of serine proteases. Its primary target is elastase, but it also has a moderate affinity for plasmin and thrombin. The chain is Alpha-1-antitrypsin 1-1 (Serpina1a) from Mus musculus (Mouse).